A 356-amino-acid polypeptide reads, in one-letter code: D-alanine--D-alanine ligase (356 aa).

Residues 134 to 339 (KQLFATRGLP…YSELITDLIN (206 aa)) enclose the ATP-grasp domain. 167–222 (EGKLTYPVFVKPANLGSSVGISKCTDSETLIHGIEEALQFDRKLVIEQGVNAREVE) lines the ATP pocket. Mg(2+)-binding residues include Asp293, Glu306, and Asn308.

This sequence belongs to the D-alanine--D-alanine ligase family. Mg(2+) is required as a cofactor. Requires Mn(2+) as cofactor.

Its subcellular location is the cytoplasm. The catalysed reaction is 2 D-alanine + ATP = D-alanyl-D-alanine + ADP + phosphate + H(+). It participates in cell wall biogenesis; peptidoglycan biosynthesis. In terms of biological role, cell wall formation. In Macrococcus caseolyticus (strain JCSC5402) (Macrococcoides caseolyticum), this protein is D-alanine--D-alanine ligase.